The chain runs to 301 residues: NADH-cytochrome b5 reductase 3 (301 aa).

Residue Gly-2 is the site of N-myristoyl glycine attachment. One can recognise an FAD-binding FR-type domain in the interval 40 to 152 (DIKYSLRLID…RGPNGLLVYQ (113 aa)). Lys-42 is modified (N6-acetyllysine). Tyr-43 carries the post-translational modification Phosphotyrosine. FAD contacts are provided by Arg-92, Pro-93, Tyr-94, Val-109, Lys-111, and Phe-114. An N6-acetyllysine modification is found at Lys-120. Residues Lys-126, Met-127, Ser-128, and Thr-185 each coordinate FAD.

Belongs to the flavoprotein pyridine nucleotide cytochrome reductase family. In terms of assembly, component of a complex composed of cytochrome b5, NADH-cytochrome b5 reductase (CYB5R3) and MTARC2. Interacts with MTLN; the interaction is required to maintain cellular lipid composition and leads to stimulation of mitochondrial respiratory complex I activity. Requires FAD as cofactor.

The protein resides in the endoplasmic reticulum membrane. Its subcellular location is the mitochondrion outer membrane. It catalyses the reaction 2 Fe(III)-[cytochrome b5] + NADH = 2 Fe(II)-[cytochrome b5] + NAD(+) + H(+). In terms of biological role, catalyzes the reduction of two molecules of cytochrome b5 using NADH as the electron donor. This is NADH-cytochrome b5 reductase 3 (CYB5R3) from Macaca fascicularis (Crab-eating macaque).